The chain runs to 332 residues: Biotin synthase (332 aa).

One can recognise a Radical SAM core domain in the interval histidine 53–arginine 282. [4Fe-4S] cluster-binding residues include cysteine 71, cysteine 75, and cysteine 78. Cysteine 115, cysteine 147, cysteine 207, and arginine 277 together coordinate [2Fe-2S] cluster.

It belongs to the radical SAM superfamily. Biotin synthase family. In terms of assembly, homodimer. Requires [4Fe-4S] cluster as cofactor. [2Fe-2S] cluster is required as a cofactor.

It catalyses the reaction (4R,5S)-dethiobiotin + (sulfur carrier)-SH + 2 reduced [2Fe-2S]-[ferredoxin] + 2 S-adenosyl-L-methionine = (sulfur carrier)-H + biotin + 2 5'-deoxyadenosine + 2 L-methionine + 2 oxidized [2Fe-2S]-[ferredoxin]. Its pathway is cofactor biosynthesis; biotin biosynthesis; biotin from 7,8-diaminononanoate: step 2/2. Catalyzes the conversion of dethiobiotin (DTB) to biotin by the insertion of a sulfur atom into dethiobiotin via a radical-based mechanism. In Bacillus cereus (strain AH187), this protein is Biotin synthase.